The primary structure comprises 126 residues: Cyclin-dependent kinase 2-associated protein 2 (126 aa).

The tract at residues 1-48 (MSYKPIAPAPSSTPGSSTPGPGTPVPTGSVPSPSGSVPGAGAPFRPLF) is disordered. Over residues 9 to 43 (APSSTPGSSTPGPGTPVPTGSVPSPSGSVPGAGAP) the composition is skewed to low complexity. Residues 64-106 (PPGAQGSQSTYTDLLSVIEEMGKEIRPTYAGSKSAMERLKRGI) are interaction with CDK2.

It belongs to the CDK2AP family. Component of the nucleosome remodeling and deacetylase (NuRD) repressor complex, composed of core proteins MTA1, MTA2, MTA3, RBBP4, RBBP7, HDAC1, HDAC2, MBD2, MBD3, and peripherally associated proteins CDK2AP1, CDK2AP2, GATAD2A, GATAD2B, CHD3, CHD4 and CHD5. The exact stoichiometry of the NuRD complex is unknown, and some subunits such as MBD2 and MBD3, GATAD2A and GATAD2B, and CHD3, CHD4 and CHD5 define mutually exclusive NuRD complexes. Interacts with CDK2AP1. Interacts with CDK2. Interacts with MAPK1. Phosphorylated by MAPK1 and CDK2. In terms of tissue distribution, ubiquitous.

The protein localises to the cytoplasm. The protein resides in the nucleus. Functionally, acts as a component of the histone deacetylase NuRD complex which participates in the remodeling of chromatin. Inhibits cell cycle G1/S phase transition by repressing CDK2 expression and activation; represses CDK2 activation by inhibiting its interaction with cyclin E and A. Plays a role in regulating the self-renewal of embryonic stem cells (ESCs) and in maintaining cell survival during terminal differentiation of ESCs. Regulates microtubule organization of metaphase II oocytes. The polypeptide is Cyclin-dependent kinase 2-associated protein 2 (CDK2AP2) (Homo sapiens (Human)).